The following is a 75-amino-acid chain: Large ribosomal subunit protein bL32c (75 aa).

Residues 49 to 75 (SPGPTTPIKPNPKKQTGRRPRSQRRRT) form a disordered region. Positions 59 to 75 (NPKKQTGRRPRSQRRRT) are enriched in basic residues.

It belongs to the bacterial ribosomal protein bL32 family.

The protein resides in the plastid. The protein localises to the chloroplast. The polypeptide is Large ribosomal subunit protein bL32c (Nephroselmis olivacea (Green alga)).